Here is a 239-residue protein sequence, read N- to C-terminus: Probable GTP-binding protein EngB (239 aa).

Residues 23–219 (QVPEIAFAGR…NDKILELLGL (197 aa)) form the EngB-type G domain. GTP contacts are provided by residues 31-38 (GRSNAGKS), 58-62 (GRTQH), 92-95 (DLPG), 159-162 (TKSD), and 193-200 (FTAQLFSA). Serine 38 and threonine 60 together coordinate Mg(2+).

It belongs to the TRAFAC class TrmE-Era-EngA-EngB-Septin-like GTPase superfamily. EngB GTPase family. The cofactor is Mg(2+).

In terms of biological role, necessary for normal cell division and for the maintenance of normal septation. This is Probable GTP-binding protein EngB from Herminiimonas arsenicoxydans.